The primary structure comprises 308 residues: UDP-3-O-acyl-N-acetylglucosamine deacetylase (308 aa).

The Zn(2+) site is built by His77, His233, and Asp237. Catalysis depends on His260, which acts as the Proton donor.

Belongs to the LpxC family. The cofactor is Zn(2+).

The catalysed reaction is a UDP-3-O-[(3R)-3-hydroxyacyl]-N-acetyl-alpha-D-glucosamine + H2O = a UDP-3-O-[(3R)-3-hydroxyacyl]-alpha-D-glucosamine + acetate. It functions in the pathway glycolipid biosynthesis; lipid IV(A) biosynthesis; lipid IV(A) from (3R)-3-hydroxytetradecanoyl-[acyl-carrier-protein] and UDP-N-acetyl-alpha-D-glucosamine: step 2/6. Catalyzes the hydrolysis of UDP-3-O-myristoyl-N-acetylglucosamine to form UDP-3-O-myristoylglucosamine and acetate, the committed step in lipid A biosynthesis. The sequence is that of UDP-3-O-acyl-N-acetylglucosamine deacetylase from Nitratidesulfovibrio vulgaris (strain ATCC 29579 / DSM 644 / CCUG 34227 / NCIMB 8303 / VKM B-1760 / Hildenborough) (Desulfovibrio vulgaris).